A 144-amino-acid chain; its full sequence is D-aminoacyl-tRNA deacylase (144 aa).

The Gly-cisPro motif, important for rejection of L-amino acids motif lies at 136–137 (GP).

This sequence belongs to the DTD family. As to quaternary structure, homodimer.

It localises to the cytoplasm. It catalyses the reaction glycyl-tRNA(Ala) + H2O = tRNA(Ala) + glycine + H(+). The enzyme catalyses a D-aminoacyl-tRNA + H2O = a tRNA + a D-alpha-amino acid + H(+). Its function is as follows. An aminoacyl-tRNA editing enzyme that deacylates mischarged D-aminoacyl-tRNAs. Also deacylates mischarged glycyl-tRNA(Ala), protecting cells against glycine mischarging by AlaRS. Acts via tRNA-based rather than protein-based catalysis; rejects L-amino acids rather than detecting D-amino acids in the active site. By recycling D-aminoacyl-tRNA to D-amino acids and free tRNA molecules, this enzyme counteracts the toxicity associated with the formation of D-aminoacyl-tRNA entities in vivo and helps enforce protein L-homochirality. The protein is D-aminoacyl-tRNA deacylase of Haemophilus influenzae (strain PittGG).